A 382-amino-acid chain; its full sequence is Myb-like transcription factor (382 aa).

3 Myb-like domains span residues 1 to 57 (MPRS…RWSK), 58 to 108 (ITGA…QHCL), and 109 to 160 (DPSL…ITLF). The segment covering 194 to 210 (MSMDASEDGDDAEDDQT) has biased composition (acidic residues). Positions 194 to 240 (MSMDASEDGDDAEDDQTPDSYTSISTSSFDDILGGSSSSPSAADTMT) are disordered. Over residues 211–240 (PDSYTSISTSSFDDILGGSSSSPSAADTMT) the composition is skewed to polar residues.

The protein localises to the nucleus. In terms of biological role, transcription factor; part of the gene cluster that mediates the biosynthesis of 1233A, a natural compound known as an inhibitor of HMG-CoA synthase in the mevalonate pathway and with antibacterial and antifungal activities. Involved in hygromycin B-induced transcriptional control of the cluster. The protein is Myb-like transcription factor of Fusarium sp.